The following is a 59-amino-acid chain: Protein SspF (59 aa).

It belongs to the alpha/beta-type SASP family.

Functionally, may play some important role in either sporulation or the dormant spore. This is Protein SspF (sspF) from Bacillus cereus (strain ATCC 14579 / DSM 31 / CCUG 7414 / JCM 2152 / NBRC 15305 / NCIMB 9373 / NCTC 2599 / NRRL B-3711).